Here is a 261-residue protein sequence, read N- to C-terminus: Prostatic glandular kallikrein-6 (261 aa).

The N-terminal stretch at 1 to 18 (MWLLILFLILSLGWNDAA) is a signal peptide. A propeptide spans 19-24 (PPGQSR) (activation peptide). The Peptidase S1 domain occupies 25–258 (IIGGFNCEKN…FTSWMKKVMK (234 aa)). 5 disulfide bridges follow: C31–C173, C50–C66, C152–C219, C184–C198, and C209–C234. H65 (charge relay system) is an active-site residue. N108 carries an N-linked (GlcNAc...) asparagine glycan. Residue D120 is the Charge relay system of the active site. S213 acts as the Charge relay system in catalysis.

Belongs to the peptidase S1 family. Kallikrein subfamily.

It catalyses the reaction Preferential cleavage of Arg-|-Xaa bonds in small molecule substrates. Highly selective action to release kallidin (lysyl-bradykinin) from kininogen involves hydrolysis of Met-|-Xaa or Leu-|-Xaa.. Glandular kallikreins cleave Met-Lys and Arg-Ser bonds in kininogen to release Lys-bradykinin. The polypeptide is Prostatic glandular kallikrein-6 (Klk6) (Rattus norvegicus (Rat)).